The sequence spans 967 residues: Siderophore exporter MmpL4 (967 aa).

Transmembrane regions (helical) follow at residues 26 to 46 (AFAV…TVFV), 210 to 230 (VIFI…LLLI), 242 to 262 (VVAV…VSLL), 303 to 323 (AHVI…LSFA), 333 to 353 (IPCA…GPAV), 384 to 404 (WPLP…LALP), 769 to 789 (WDLL…MLII), 793 to 813 (FIAA…SFGL), 821 to 841 (ILAI…LLAV), 875 to 895 (VVTN…VSDL), and 913 to 934 (TLIV…WFWW). The tract at residues 943–967 (ARTPTVPSETQPAGRPLAMSSDRLG) is disordered.

This sequence belongs to the resistance-nodulation-cell division (RND) (TC 2.A.6) family. MmpL subfamily. In terms of assembly, interacts with MmpS4.

Its subcellular location is the cell inner membrane. In terms of biological role, part of an export system, which is required for biosynthesis and secretion of siderophores. The polypeptide is Siderophore exporter MmpL4 (mmpL4) (Mycobacterium tuberculosis (strain CDC 1551 / Oshkosh)).